A 146-amino-acid chain; its full sequence is Large ribosomal subunit protein uL15 (146 aa).

A disordered region spans residues 1–65; the sequence is MSDIQLNTLK…GQMPLQRRLP (65 aa). The span at 24–34 shows a compositional bias: gly residues; the sequence is RGIGSGLGKTA.

The protein belongs to the universal ribosomal protein uL15 family. As to quaternary structure, part of the 50S ribosomal subunit.

Binds to the 23S rRNA. The chain is Large ribosomal subunit protein uL15 from Bordetella petrii (strain ATCC BAA-461 / DSM 12804 / CCUG 43448).